A 360-amino-acid polypeptide reads, in one-letter code: Sensor histidine kinase LiaS (360 aa).

The Cytoplasmic portion of the chain corresponds to 1–15 (MRKKMLASLQWRAIR). A helical transmembrane segment spans residues 16 to 36 (MTTGISLLLFVCLISFMMFYY). Topologically, residues 37 to 47 (RLDPLVLLSSS) are extracellular. A helical transmembrane segment spans residues 48–68 (WFGIPFILILLLISVTVGFAS). Over 69-360 (GYMYGNRLKT…ENERDSSIID (292 aa)) the chain is Cytoplasmic. The 53-residue stretch at 74-126 (NRLKTRIDTLIESILTFENGNFAYRIPPLGDDEIGLAADQLNEMAKRVELQVA) folds into the HAMP domain. One can recognise a Histidine kinase domain in the interval 153-346 (RLARDLHDAV…QIEVKVPIFP (194 aa)). Histidine 159 carries the post-translational modification Phosphohistidine; by autocatalysis.

The protein resides in the cell membrane. It carries out the reaction ATP + protein L-histidine = ADP + protein N-phospho-L-histidine.. In terms of biological role, member of the two-component regulatory system LiaS/LiaR probably involved in response to a subset of cell wall-active antibiotics that interfere with the lipid II cycle in the cytoplasmic membrane (bacitracin, nisin, ramoplanin and vancomycin). Also seems to be involved in response to cationic antimicrobial peptides and secretion stress. Activates probably LiaR by phosphorylation. This Bacillus subtilis (strain 168) protein is Sensor histidine kinase LiaS (liaS).